Consider the following 337-residue polypeptide: Heat-inducible transcription repressor HrcA (337 aa).

It belongs to the HrcA family.

Negative regulator of class I heat shock genes (grpE-dnaK-dnaJ and groELS operons). Prevents heat-shock induction of these operons. This chain is Heat-inducible transcription repressor HrcA, found in Arthrobacter sp. (strain FB24).